Here is an 85-residue protein sequence, read N- to C-terminus: Protein RnfH (85 aa).

It belongs to the UPF0125 (RnfH) family.

The polypeptide is Protein RnfH (Cereibacter sphaeroides (strain ATCC 17029 / ATH 2.4.9) (Rhodobacter sphaeroides)).